A 248-amino-acid polypeptide reads, in one-letter code: Probable transcriptional regulatory protein BRADO1143 (248 aa).

It belongs to the TACO1 family.

Its subcellular location is the cytoplasm. The polypeptide is Probable transcriptional regulatory protein BRADO1143 (Bradyrhizobium sp. (strain ORS 278)).